Here is a 186-residue protein sequence, read N- to C-terminus: Putative CTD phosphatase-like protein 355R (186 aa).

The 181-residue stretch at Glu2–Leu182 folds into the FCP1 homology domain.

This sequence belongs to the IIV-6 355R family.

Functionally, may function as a phosphatase. This is Putative CTD phosphatase-like protein 355R from Aedes vexans (Inland floodwater mosquito).